A 469-amino-acid chain; its full sequence is Asparagine--tRNA ligase (469 aa).

Belongs to the class-II aminoacyl-tRNA synthetase family. Homodimer.

The protein resides in the cytoplasm. It catalyses the reaction tRNA(Asn) + L-asparagine + ATP = L-asparaginyl-tRNA(Asn) + AMP + diphosphate + H(+). The chain is Asparagine--tRNA ligase from Porphyromonas gingivalis (strain ATCC BAA-308 / W83).